The following is a 129-amino-acid chain: Small ribosomal subunit protein uS11 (129 aa).

This sequence belongs to the universal ribosomal protein uS11 family. In terms of assembly, part of the 30S ribosomal subunit. Interacts with proteins S7 and S18. Binds to IF-3.

Functionally, located on the platform of the 30S subunit, it bridges several disparate RNA helices of the 16S rRNA. Forms part of the Shine-Dalgarno cleft in the 70S ribosome. This is Small ribosomal subunit protein uS11 from Synechococcus sp. (strain RCC307).